Reading from the N-terminus, the 104-residue chain is ATP-dependent Clp protease adapter protein ClpS (104 aa).

The segment at 1–20 is disordered; sequence MAEETPTRSPGGAAVLDKAP.

The protein belongs to the ClpS family. In terms of assembly, binds to the N-terminal domain of the chaperone ClpA.

Functionally, involved in the modulation of the specificity of the ClpAP-mediated ATP-dependent protein degradation. The chain is ATP-dependent Clp protease adapter protein ClpS from Synechococcus sp. (strain CC9902).